The primary structure comprises 956 residues: UvrABC system protein A (956 aa).

An ATP-binding site is contributed by 33-40 (GLSGSGKS). A C4-type zinc finger spans residues 252–279 (CPYCGFSVGELEPRMFSFNSPFGACPTC). ABC transporter domains lie at 309 to 587 (WRPI…KNSI) and 607 to 936 (GNGL…KYLK). 639–646 (GVSGSGKS) serves as a coordination point for ATP. The C4-type zinc-finger motif lies at 738–764 (CEACKGDGIIKIEMHFLPDVYVPCEVC).

Belongs to the ABC transporter superfamily. UvrA family. As to quaternary structure, forms a heterotetramer with UvrB during the search for lesions.

The protein localises to the cytoplasm. In terms of biological role, the UvrABC repair system catalyzes the recognition and processing of DNA lesions. UvrA is an ATPase and a DNA-binding protein. A damage recognition complex composed of 2 UvrA and 2 UvrB subunits scans DNA for abnormalities. When the presence of a lesion has been verified by UvrB, the UvrA molecules dissociate. The protein is UvrABC system protein A of Listeria monocytogenes serotype 4b (strain F2365).